The following is a 494-amino-acid chain: UDP-N-acetylmuramate--L-alanine ligase (494 aa).

134-140 contacts ATP; that stretch reads GSHGKTT.

Belongs to the MurCDEF family.

It is found in the cytoplasm. It catalyses the reaction UDP-N-acetyl-alpha-D-muramate + L-alanine + ATP = UDP-N-acetyl-alpha-D-muramoyl-L-alanine + ADP + phosphate + H(+). It functions in the pathway cell wall biogenesis; peptidoglycan biosynthesis. Its function is as follows. Cell wall formation. The sequence is that of UDP-N-acetylmuramate--L-alanine ligase from Prochlorococcus marinus (strain NATL1A).